We begin with the raw amino-acid sequence, 618 residues long: ADP,ATP carrier protein 2, chloroplastic (618 aa).

A chloroplast-targeting transit peptide spans 1 to 76 (MEGLIQTRGI…KERSRGFICK (76 aa)). An N-acetylalanine modification is found at A77. 11 helical membrane passes run 110-130 (LKKI…YTIL), 148-168 (IIPF…MLLY), 179-199 (ALFY…GFVM), 237-257 (LFYV…FWGF), 270-289 (FYPL…GRTV), 312-332 (AMMS…WWVN), 368-388 (LATL…TWKS), 401-421 (SAFM…MMLL), 441-461 (VLLL…PFAP), 464-484 (AKLG…QNIF), and 542-562 (LANS…AWLA). Residues 586–618 (RASSVKIPVVSQEDAPSGETTSQLSEKSTPTGI) are disordered. Residues 603–618 (GETTSQLSEKSTPTGI) are compositionally biased toward polar residues.

The protein belongs to the ADP/ATP translocase tlc (TC 2.A.12.2) family.

The protein localises to the plastid. It is found in the chloroplast membrane. The polypeptide is ADP,ATP carrier protein 2, chloroplastic (AATP2) (Arabidopsis thaliana (Mouse-ear cress)).